The sequence spans 485 residues: Ribulose bisphosphate carboxylase large chain (485 aa).

Asparagine 124 and threonine 174 together coordinate substrate. Lysine 176 serves as the catalytic Proton acceptor. Lysine 178 provides a ligand contact to substrate. Residues lysine 202, aspartate 204, and glutamate 205 each contribute to the Mg(2+) site. The residue at position 202 (lysine 202) is an N6-carboxylysine. The Proton acceptor role is filled by histidine 294. Substrate-binding residues include arginine 295, histidine 327, and serine 379.

The protein belongs to the RuBisCO large chain family. Type I subfamily. As to quaternary structure, heterohexadecamer of 8 large chains and 8 small chains. Mg(2+) serves as cofactor.

The catalysed reaction is 2 (2R)-3-phosphoglycerate + 2 H(+) = D-ribulose 1,5-bisphosphate + CO2 + H2O. It catalyses the reaction D-ribulose 1,5-bisphosphate + O2 = 2-phosphoglycolate + (2R)-3-phosphoglycerate + 2 H(+). In terms of biological role, ruBisCO catalyzes two reactions: the carboxylation of D-ribulose 1,5-bisphosphate, the primary event in carbon dioxide fixation, as well as the oxidative fragmentation of the pentose substrate. Both reactions occur simultaneously and in competition at the same active site. The protein is Ribulose bisphosphate carboxylase large chain of Rhodopseudomonas palustris (strain TIE-1).